The chain runs to 458 residues: Phosphoglucosamine mutase (458 aa).

The active-site Phosphoserine intermediate is S109. 4 residues coordinate Mg(2+): S109, D251, D253, and D255. S109 carries the post-translational modification Phosphoserine.

The protein belongs to the phosphohexose mutase family. It depends on Mg(2+) as a cofactor. In terms of processing, activated by phosphorylation.

It catalyses the reaction alpha-D-glucosamine 1-phosphate = D-glucosamine 6-phosphate. In terms of biological role, catalyzes the conversion of glucosamine-6-phosphate to glucosamine-1-phosphate. In Myxococcus xanthus (strain DK1622), this protein is Phosphoglucosamine mutase.